A 208-amino-acid chain; its full sequence is MFTPIDQAIEHFKQNKFVIVMDDAGRENEGDLICAAENVSTEQMAFLVRHSSGYVCAPMTNAIADKLDLPLLRTGMKFESNDDDRHGTAYTITVDVAQGTTTGISAHDRSMTCRALADSSSTPKSFLKPGHICPLRAADGGVLQRRGHTEAGVDLCKLSGLSPVAVIGELVNDDEQGTMMRLNDCQAFGKKHGIPLISIEELAQYLKK.

Threonine 3 carries the post-translational modification Phosphothreonine. Glutamate 27 is a Mg(2+) binding site. A D-ribulose 5-phosphate-binding site is contributed by aspartate 31. Cysteine 56 bears the S-glutathionyl cysteine; by GRX2 mark. D-ribulose 5-phosphate is bound by residues threonine 88 and 145–149; that span reads RRGHT. Histidine 148 lines the Mg(2+) pocket.

This sequence belongs to the DHBP synthase family. In terms of assembly, homodimer. It depends on Mg(2+) as a cofactor. Requires Mn(2+) as cofactor. Post-translationally, S-glutathionylation of Cys-56 is reversible and dependent on the cytoplasmic isoform of glutaredoxin-2.

The protein localises to the cytoplasm. It is found in the nucleus. The protein resides in the mitochondrion intermembrane space. It catalyses the reaction D-ribulose 5-phosphate = (2S)-2-hydroxy-3-oxobutyl phosphate + formate + H(+). The protein operates within cofactor biosynthesis; riboflavin biosynthesis; 2-hydroxy-3-oxobutyl phosphate from D-ribulose 5-phosphate: step 1/1. Catalyzes the conversion of D-ribulose 5-phosphate to formate and 3,4-dihydroxy-2-butanone 4-phosphate. Also has an unrelated function in expression of mitochondrial respiration. The polypeptide is 3,4-dihydroxy-2-butanone 4-phosphate synthase (RIB3) (Saccharomyces cerevisiae (strain ATCC 204508 / S288c) (Baker's yeast)).